A 437-amino-acid polypeptide reads, in one-letter code: Phosphomethylpyrimidine synthase (437 aa).

Substrate contacts are provided by residues N69, M98, Y127, H163, 185–187, 226–229, and E265; these read SRG and DACR. H269 lines the Zn(2+) pocket. Position 292 (Y292) interacts with substrate. H333 lines the Zn(2+) pocket. Residues C409, C412, and C416 each coordinate [4Fe-4S] cluster.

The protein belongs to the ThiC family. It depends on [4Fe-4S] cluster as a cofactor.

The enzyme catalyses 5-amino-1-(5-phospho-beta-D-ribosyl)imidazole + S-adenosyl-L-methionine = 4-amino-2-methyl-5-(phosphooxymethyl)pyrimidine + CO + 5'-deoxyadenosine + formate + L-methionine + 3 H(+). It functions in the pathway cofactor biosynthesis; thiamine diphosphate biosynthesis. Catalyzes the synthesis of the hydroxymethylpyrimidine phosphate (HMP-P) moiety of thiamine from aminoimidazole ribotide (AIR) in a radical S-adenosyl-L-methionine (SAM)-dependent reaction. The protein is Phosphomethylpyrimidine synthase of Clostridium botulinum (strain Okra / Type B1).